The primary structure comprises 20 residues: Thylakoid lumenal 20 kDa protein (20 aa).

Residues 1-20 (RDVDVGSFLPKSPSDPSMVL) are disordered.

Its subcellular location is the plastid. It is found in the chloroplast thylakoid lumen. This chain is Thylakoid lumenal 20 kDa protein, found in Spinacia oleracea (Spinach).